The chain runs to 71 residues: MAQYHQQHEMKQTMAETQYVTAPPPMGYPVMMKDSPQTVQPPHEGQSKGSGGFLRGCLAAMCCCCVLDCVF.

The disordered stretch occupies residues 30 to 49; the sequence is VMMKDSPQTVQPPHEGQSKG. The chain crosses the membrane as a helical span at residues 48–64; sequence KGSGGFLRGCLAAMCCC.

It belongs to the CYSTM1 family. Heterodimers. Interacts with CYSTM7 and WIH1/CYSTM13. As to expression, mostly expressed in leaves and flowers and, to a lower extent, in stems, siliques, shoots and roots.

It is found in the cell membrane. Its subcellular location is the cytoplasm. The protein resides in the mitochondrion. In terms of biological role, negatively regulates salt stress responses and Na(+) homeostasis. Prevents Na(+) efflux, disturbs reactive oxygen species (ROS) homeostasis, and represses the expression of nuclear salt stress-responsive genes. Involved in resistance to abiotic stress. This is Protein CYSTEINE-RICH TRANSMEMBRANE MODULE 3 from Arabidopsis thaliana (Mouse-ear cress).